The primary structure comprises 66 residues: Large ribosomal subunit protein bL35 (66 aa).

Belongs to the bacterial ribosomal protein bL35 family.

The polypeptide is Large ribosomal subunit protein bL35 (Brucella canis (strain ATCC 23365 / NCTC 10854 / RM-666)).